A 165-amino-acid chain; its full sequence is Phosphopantetheine adenylyltransferase (165 aa).

A substrate-binding site is contributed by serine 10. ATP-binding positions include 10–11 and histidine 18; that span reads SF. Substrate contacts are provided by lysine 42, threonine 79, and arginine 93. ATP is bound by residues 94–96, glutamate 104, and 129–135; these read GLR and VRPITAT.

The protein belongs to the bacterial CoaD family. As to quaternary structure, homohexamer. Requires Mg(2+) as cofactor.

It is found in the cytoplasm. The enzyme catalyses (R)-4'-phosphopantetheine + ATP + H(+) = 3'-dephospho-CoA + diphosphate. The protein operates within cofactor biosynthesis; coenzyme A biosynthesis; CoA from (R)-pantothenate: step 4/5. Reversibly transfers an adenylyl group from ATP to 4'-phosphopantetheine, yielding dephospho-CoA (dPCoA) and pyrophosphate. The polypeptide is Phosphopantetheine adenylyltransferase (Nitrobacter winogradskyi (strain ATCC 25391 / DSM 10237 / CIP 104748 / NCIMB 11846 / Nb-255)).